We begin with the raw amino-acid sequence, 283 residues long: Shikimate dehydrogenase (NADP(+)) (283 aa).

Shikimate is bound by residues 22–24 (SRS) and Thr-69. Residue Lys-73 is the Proton acceptor of the active site. Shikimate-binding residues include Asn-93 and Asp-108. NADP(+) is bound by residues 133-137 (GAGGS) and Leu-222. Tyr-224 lines the shikimate pocket. Gly-245 contributes to the NADP(+) binding site.

Belongs to the shikimate dehydrogenase family. In terms of assembly, homodimer.

It catalyses the reaction shikimate + NADP(+) = 3-dehydroshikimate + NADPH + H(+). The protein operates within metabolic intermediate biosynthesis; chorismate biosynthesis; chorismate from D-erythrose 4-phosphate and phosphoenolpyruvate: step 4/7. Involved in the biosynthesis of the chorismate, which leads to the biosynthesis of aromatic amino acids. Catalyzes the reversible NADPH linked reduction of 3-dehydroshikimate (DHSA) to yield shikimate (SA). The protein is Shikimate dehydrogenase (NADP(+)) of Rhodopseudomonas palustris (strain BisB5).